A 71-amino-acid polypeptide reads, in one-letter code: Small ribosomal subunit protein bS21 (71 aa).

This sequence belongs to the bacterial ribosomal protein bS21 family.

This is Small ribosomal subunit protein bS21 from Baumannia cicadellinicola subsp. Homalodisca coagulata.